Here is a 75-residue protein sequence, read N- to C-terminus: Metallothionein-like protein 1 (75 aa).

It belongs to the metallothionein superfamily. Type 15 family.

Metallothioneins have a high content of cysteine residues that bind various heavy metals. In Trifolium repens (Creeping white clover), this protein is Metallothionein-like protein 1 (MT1B).